A 153-amino-acid polypeptide reads, in one-letter code: MGFKGVGTYEIVPYQAPSLNLNAWEGKLEPGAVVRTYTRGDKPSDNAKWQVALVAGSGDSAEYLIINVHSGYFLTATKENHIVSTPQISPTDPSARWTIKPATTHQYEVFTINNKVSELGQLTVKDYSTHSGADVLSASAKTADNQKWYFDAK.

Residues 22-25 (NAWE) and asparagine 46 each bind beta-D-galactosyl-(1-&gt;3)-N-acetyl-D-galactosamine. Residues 58 to 153 (GDSAEYLIIN…DNQKWYFDAK (96 aa)) form the Ricin B-type lectin domain.

In terms of assembly, homodimer.

Functionally, lectin that primarily recognizes glycans with a non-reducing terminal N-acetylgalactosamine (GalNAc), with a preference for the alpha- over the beta-anomer. Can also bind non-reducing terminal galactose (Gal) residues but with a lower affinity. Strongly interacts with glycolipid type glycans with terminal non-reducing Gal or GalNAc but fails to bind sialylated or fucosylated forms of the same glycans. Strongly interacts with galactosylated N-glycans, displaying highest affinity for alpha-1-3 branched mono-antennary N-glycans but also binding to multi-antennary glycans. The sequence is that of Agglutinin from Sclerotinia sclerotiorum (strain ATCC 18683 / 1980 / Ss-1) (White mold).